Consider the following 329-residue polypeptide: Beta-ketoacyl-[acyl-carrier-protein] synthase III (329 aa).

Catalysis depends on residues C123 and H256. The interval 257–261 (QANIR) is ACP-binding. Residue N286 is part of the active site.

Belongs to the thiolase-like superfamily. FabH family. In terms of assembly, homodimer.

It is found in the cytoplasm. The catalysed reaction is malonyl-[ACP] + acetyl-CoA + H(+) = 3-oxobutanoyl-[ACP] + CO2 + CoA. The protein operates within lipid metabolism; fatty acid biosynthesis. Catalyzes the condensation reaction of fatty acid synthesis by the addition to an acyl acceptor of two carbons from malonyl-ACP. Catalyzes the first condensation reaction which initiates fatty acid synthesis and may therefore play a role in governing the total rate of fatty acid production. Possesses both acetoacetyl-ACP synthase and acetyl transacylase activities. Its substrate specificity determines the biosynthesis of branched-chain and/or straight-chain of fatty acids. The sequence is that of Beta-ketoacyl-[acyl-carrier-protein] synthase III from Burkholderia thailandensis (strain ATCC 700388 / DSM 13276 / CCUG 48851 / CIP 106301 / E264).